A 104-amino-acid polypeptide reads, in one-letter code: Large ribosomal subunit protein uL24 (104 aa).

This sequence belongs to the universal ribosomal protein uL24 family. Part of the 50S ribosomal subunit.

Its function is as follows. One of two assembly initiator proteins, it binds directly to the 5'-end of the 23S rRNA, where it nucleates assembly of the 50S subunit. Functionally, one of the proteins that surrounds the polypeptide exit tunnel on the outside of the subunit. The protein is Large ribosomal subunit protein uL24 of Corynebacterium jeikeium (strain K411).